We begin with the raw amino-acid sequence, 342 residues long: Anthranilate phosphoribosyltransferase (342 aa).

5-phospho-alpha-D-ribose 1-diphosphate contacts are provided by residues glycine 84, 87 to 88 (GD), threonine 92, 94 to 97 (NITT), 112 to 120 (KHGNRSVSS), and serine 124. Position 84 (glycine 84) interacts with anthranilate. Threonine 96 is a Mg(2+) binding site. Residue asparagine 115 participates in anthranilate binding. Arginine 170 contacts anthranilate. Mg(2+)-binding residues include aspartate 228 and glutamate 229.

This sequence belongs to the anthranilate phosphoribosyltransferase family. As to quaternary structure, homodimer. It depends on Mg(2+) as a cofactor.

The enzyme catalyses N-(5-phospho-beta-D-ribosyl)anthranilate + diphosphate = 5-phospho-alpha-D-ribose 1-diphosphate + anthranilate. It functions in the pathway amino-acid biosynthesis; L-tryptophan biosynthesis; L-tryptophan from chorismate: step 2/5. Catalyzes the transfer of the phosphoribosyl group of 5-phosphorylribose-1-pyrophosphate (PRPP) to anthranilate to yield N-(5'-phosphoribosyl)-anthranilate (PRA). This is Anthranilate phosphoribosyltransferase from Corynebacterium efficiens (strain DSM 44549 / YS-314 / AJ 12310 / JCM 11189 / NBRC 100395).